A 134-amino-acid chain; its full sequence is Small ribosomal subunit protein uS8 (134 aa).

This sequence belongs to the universal ribosomal protein uS8 family. In terms of assembly, part of the 30S ribosomal subunit. Contacts proteins S5 and S12.

One of the primary rRNA binding proteins, it binds directly to 16S rRNA central domain where it helps coordinate assembly of the platform of the 30S subunit. This chain is Small ribosomal subunit protein uS8, found in Thermosipho africanus (strain TCF52B).